A 472-amino-acid polypeptide reads, in one-letter code: 3-isopropylmalate dehydratase large subunit (472 aa).

A disordered region spans residues 289–312; the sequence is TWGTNPAQGTGVSQVVPSPDDAKD. Residues 290–304 are compositionally biased toward polar residues; it reads WGTNPAQGTGVSQVV. [4Fe-4S] cluster contacts are provided by Cys347, Cys407, and Cys410.

This sequence belongs to the aconitase/IPM isomerase family. LeuC type 1 subfamily. Heterodimer of LeuC and LeuD. The cofactor is [4Fe-4S] cluster.

It catalyses the reaction (2R,3S)-3-isopropylmalate = (2S)-2-isopropylmalate. It participates in amino-acid biosynthesis; L-leucine biosynthesis; L-leucine from 3-methyl-2-oxobutanoate: step 2/4. Its function is as follows. Catalyzes the isomerization between 2-isopropylmalate and 3-isopropylmalate, via the formation of 2-isopropylmaleate. This chain is 3-isopropylmalate dehydratase large subunit, found in Halalkalibacterium halodurans (strain ATCC BAA-125 / DSM 18197 / FERM 7344 / JCM 9153 / C-125) (Bacillus halodurans).